A 390-amino-acid chain; its full sequence is Bifunctional enzyme IspD/IspF (390 aa).

The tract at residues 1–229 (MAAGRGERAG…RQDHAVFPDI (229 aa)) is 2-C-methyl-D-erythritol 4-phosphate cytidylyltransferase. Residues 230–390 (RTGNGYDVHS…TVIYPGEVPE (161 aa)) are 2-C-methyl-D-erythritol 2,4-cyclodiphosphate synthase. A divalent metal cation-binding residues include aspartate 236 and histidine 238. Residues 236 to 238 (DVH) and 262 to 263 (HS) contribute to the 4-CDP-2-C-methyl-D-erythritol 2-phosphate site. Histidine 270 contacts a divalent metal cation. Residues 284–286 (DIG), 360–363 (TTNE), phenylalanine 367, and arginine 370 each bind 4-CDP-2-C-methyl-D-erythritol 2-phosphate.

The protein in the N-terminal section; belongs to the IspD/TarI cytidylyltransferase family. IspD subfamily. In the C-terminal section; belongs to the IspF family. A divalent metal cation is required as a cofactor.

The enzyme catalyses 2-C-methyl-D-erythritol 4-phosphate + CTP + H(+) = 4-CDP-2-C-methyl-D-erythritol + diphosphate. It carries out the reaction 4-CDP-2-C-methyl-D-erythritol 2-phosphate = 2-C-methyl-D-erythritol 2,4-cyclic diphosphate + CMP. Its pathway is isoprenoid biosynthesis; isopentenyl diphosphate biosynthesis via DXP pathway; isopentenyl diphosphate from 1-deoxy-D-xylulose 5-phosphate: step 2/6. It functions in the pathway isoprenoid biosynthesis; isopentenyl diphosphate biosynthesis via DXP pathway; isopentenyl diphosphate from 1-deoxy-D-xylulose 5-phosphate: step 4/6. Bifunctional enzyme that catalyzes the formation of 4-diphosphocytidyl-2-C-methyl-D-erythritol from CTP and 2-C-methyl-D-erythritol 4-phosphate (MEP) (IspD), and catalyzes the conversion of 4-diphosphocytidyl-2-C-methyl-D-erythritol 2-phosphate (CDP-ME2P) to 2-C-methyl-D-erythritol 2,4-cyclodiphosphate (ME-CPP) with a corresponding release of cytidine 5-monophosphate (CMP) (IspF). The sequence is that of Bifunctional enzyme IspD/IspF from Brucella suis biovar 1 (strain 1330).